Here is a 214-residue protein sequence, read N- to C-terminus: Cell division protein SepF (214 aa).

Residues 23 to 70 (YYDDRAPSRGFPRPRFDDGYGRYDGDDYDDPRREPADYPPPAGYRGGY) form a disordered region. Residues 36–58 (PRFDDGYGRYDGDDYDDPRREPA) are compositionally biased toward basic and acidic residues.

This sequence belongs to the SepF family. In terms of assembly, homodimer. Interacts with FtsZ.

The protein resides in the cytoplasm. Its function is as follows. Cell division protein that is part of the divisome complex and is recruited early to the Z-ring. Probably stimulates Z-ring formation, perhaps through the cross-linking of FtsZ protofilaments. Its function overlaps with FtsA. In Mycobacterium avium (strain 104), this protein is Cell division protein SepF.